Consider the following 32-residue polypeptide: Cytochrome b6-f complex subunit 7 (32 aa).

The helical transmembrane segment at 9 to 27 (AAVFWVLIPVGLAGGALLL) threads the bilayer.

Belongs to the PetM family. As to quaternary structure, the 4 large subunits of the cytochrome b6-f complex are cytochrome b6, subunit IV (17 kDa polypeptide, PetD), cytochrome f and the Rieske protein, while the 4 small subunits are PetG, PetL, PetM and PetN. The complex functions as a dimer.

It is found in the cellular thylakoid membrane. In terms of biological role, component of the cytochrome b6-f complex, which mediates electron transfer between photosystem II (PSII) and photosystem I (PSI), cyclic electron flow around PSI, and state transitions. In Prochlorococcus marinus (strain MIT 9303), this protein is Cytochrome b6-f complex subunit 7.